The following is a 253-amino-acid chain: 3-deoxy-manno-octulosonate cytidylyltransferase (253 aa).

It belongs to the KdsB family.

It localises to the cytoplasm. The enzyme catalyses 3-deoxy-alpha-D-manno-oct-2-ulosonate + CTP = CMP-3-deoxy-beta-D-manno-octulosonate + diphosphate. Its pathway is nucleotide-sugar biosynthesis; CMP-3-deoxy-D-manno-octulosonate biosynthesis; CMP-3-deoxy-D-manno-octulosonate from 3-deoxy-D-manno-octulosonate and CTP: step 1/1. The protein operates within bacterial outer membrane biogenesis; lipopolysaccharide biosynthesis. Its function is as follows. Activates KDO (a required 8-carbon sugar) for incorporation into bacterial lipopolysaccharide in Gram-negative bacteria. This chain is 3-deoxy-manno-octulosonate cytidylyltransferase, found in Aeromonas hydrophila subsp. hydrophila (strain ATCC 7966 / DSM 30187 / BCRC 13018 / CCUG 14551 / JCM 1027 / KCTC 2358 / NCIMB 9240 / NCTC 8049).